Reading from the N-terminus, the 364-residue chain is Dihydroorotate dehydrogenase (quinone) (364 aa).

Residues 61-65 (AGYDK) and Thr-85 contribute to the FMN site. Lys-65 contributes to the substrate binding site. Substrate is bound at residue 110 to 114 (NRLGF). Residues Asn-139 and Asn-170 each coordinate FMN. Residue Asn-170 coordinates substrate. Residue Ser-173 is the Nucleophile of the active site. Asn-175 is a binding site for substrate. Residues Lys-215 and Ser-243 each contribute to the FMN site. Residue 244 to 245 (NT) participates in substrate binding. FMN contacts are provided by residues Gly-266, Gly-295, and 316-317 (YS).

This sequence belongs to the dihydroorotate dehydrogenase family. Type 2 subfamily. Monomer. It depends on FMN as a cofactor.

It is found in the cell membrane. The catalysed reaction is (S)-dihydroorotate + a quinone = orotate + a quinol. The protein operates within pyrimidine metabolism; UMP biosynthesis via de novo pathway; orotate from (S)-dihydroorotate (quinone route): step 1/1. In terms of biological role, catalyzes the conversion of dihydroorotate to orotate with quinone as electron acceptor. This Brucella melitensis biotype 2 (strain ATCC 23457) protein is Dihydroorotate dehydrogenase (quinone).